Here is a 335-residue protein sequence, read N- to C-terminus: Beta-ketoacyl-[acyl-carrier-protein] synthase III (335 aa).

Residues Cys-119 and His-261 contribute to the active site. The interval 262–266 (QANQR) is ACP-binding. Residue Asn-291 is part of the active site.

The protein belongs to the thiolase-like superfamily. FabH family. Homodimer.

It is found in the cytoplasm. It catalyses the reaction malonyl-[ACP] + acetyl-CoA + H(+) = 3-oxobutanoyl-[ACP] + CO2 + CoA. The protein operates within lipid metabolism; fatty acid biosynthesis. Functionally, catalyzes the condensation reaction of fatty acid synthesis by the addition to an acyl acceptor of two carbons from malonyl-ACP. Catalyzes the first condensation reaction which initiates fatty acid synthesis and may therefore play a role in governing the total rate of fatty acid production. Possesses both acetoacetyl-ACP synthase and acetyl transacylase activities. Its substrate specificity determines the biosynthesis of branched-chain and/or straight-chain of fatty acids. The sequence is that of Beta-ketoacyl-[acyl-carrier-protein] synthase III from Prochlorococcus marinus subsp. pastoris (strain CCMP1986 / NIES-2087 / MED4).